Here is a 458-residue protein sequence, read N- to C-terminus: Flavonol 3-O-glucosyltransferase F3GT2 (458 aa).

His20 functions as the Proton acceptor in the catalytic mechanism. Residue His20 coordinates an anthocyanidin. Asp119 serves as the catalytic Charge relay. Thr141 contributes to the UDP-alpha-D-glucose binding site. His150 contributes to the an anthocyanidin binding site. Ala333, Gln335, His350, Trp353, Asn354, Ser355, and Glu358 together coordinate UDP-alpha-D-glucose. Gly373 is an an anthocyanidin binding site. Asp374 and Gln375 together coordinate UDP-alpha-D-glucose.

The protein belongs to the UDP-glycosyltransferase family. As to expression, expressed in ovaries.

The catalysed reaction is a flavonol + UDP-alpha-D-glucose = a flavonol 3-O-beta-D-glucoside + UDP + H(+). Its pathway is flavonoid metabolism. Functionally, catalyzes the glucosylation of quercetin. Preferentially uses UDP-glucose as sugar donor, but is also able to use UDP-gal and UDP-xyl. Is probably not required for the accumulation of anthocyanin in red-fleshed kiwifruit varieties. This chain is Flavonol 3-O-glucosyltransferase F3GT2, found in Actinidia chinensis var. chinensis (Chinese soft-hair kiwi).